A 247-amino-acid polypeptide reads, in one-letter code: Eukaryotic translation initiation factor 6 (247 aa).

Residues S174 and S175 each carry the phosphoserine; by CK1 modification.

This sequence belongs to the eIF-6 family. In terms of assembly, monomer. Associates with the 60S ribosomal subunit. Post-translationally, phosphorylation at Ser-174 and Ser-175 promotes nuclear export.

It localises to the cytoplasm. It is found in the nucleus. The protein resides in the nucleolus. Functionally, binds to the 60S ribosomal subunit and prevents its association with the 40S ribosomal subunit to form the 80S initiation complex in the cytoplasm. Is also involved in ribosome biogenesis. Associates with pre-60S subunits in the nucleus and is involved in its nuclear export. This chain is Eukaryotic translation initiation factor 6 (tif6), found in Aspergillus oryzae (strain ATCC 42149 / RIB 40) (Yellow koji mold).